The chain runs to 406 residues: 8-amino-7-oxononanoate synthase (406 aa).

Substrate is bound at residue Arg-20. 116 to 117 (GY) is a pyridoxal 5'-phosphate binding site. His-141 contacts substrate. Residues Ser-187, His-215, and Thr-243 each contribute to the pyridoxal 5'-phosphate site. Lys-246 carries the N6-(pyridoxal phosphate)lysine modification. A substrate-binding site is contributed by Thr-366.

Belongs to the class-II pyridoxal-phosphate-dependent aminotransferase family. BioF subfamily. In terms of assembly, homodimer. Requires pyridoxal 5'-phosphate as cofactor.

The catalysed reaction is 6-carboxyhexanoyl-[ACP] + L-alanine + H(+) = (8S)-8-amino-7-oxononanoate + holo-[ACP] + CO2. It participates in cofactor biosynthesis; biotin biosynthesis. In terms of biological role, catalyzes the decarboxylative condensation of pimeloyl-[acyl-carrier protein] and L-alanine to produce 8-amino-7-oxononanoate (AON), [acyl-carrier protein], and carbon dioxide. The chain is 8-amino-7-oxononanoate synthase from Cupriavidus metallidurans (strain ATCC 43123 / DSM 2839 / NBRC 102507 / CH34) (Ralstonia metallidurans).